A 295-amino-acid polypeptide reads, in one-letter code: Nuclear transcription factor Y subunit A-2 (295 aa).

The short motif at 139–165 (YVNSKQYHGIIRRRQSRAKAAAVLDQK) is the Subunit association domain (SAD) element. Residues 173–198 (KPYMHHSRHLHALRRPRGSGGRFLNT) constitute a DNA-binding region (NFYA/HAP2-type). Basic residues predominate over residues 178–189 (HSRHLHALRRPR). The disordered stretch occupies residues 178-244 (HSRHLHALRR…VVHPENGTMN (67 aa)). The span at 197–209 (NTKSQNLENSGTN) shows a compositional bias: polar residues. Over residues 216–233 (SMQIQSQPKPQQSNSQNS) the composition is skewed to low complexity.

This sequence belongs to the NFYA/HAP2 subunit family. As to quaternary structure, heterotrimeric transcription factor composed of three components, NF-YA, NF-YB and NF-YC. NF-YB and NF-YC must interact and dimerize for NF-YA association and DNA binding. Component of a heat stress-inducible transcriptional complex with NF-YA and NF-YB subunits made, at least, of NFYA2, NFYB3 and DPB3-1 in cooperation with DREB2A. In terms of tissue distribution, ubiquitous. Expressed in seedlings, roots, petioles, hypocotyls, reproductive organ tissues and leaves.

Its subcellular location is the nucleus. In terms of biological role, stimulates the transcription of various genes by recognizing and binding to a CCAAT motif in promoters. Promotes the expression of heat stress-inducible genes by contributing to the formation of a heat stress-specific transcriptional complex with NF-Y subunits (e.g. DPB3-1, NF-YA2 and NF-YB3) and DREB2A at the promoter of target genes, thus promoting heat tolerance. The polypeptide is Nuclear transcription factor Y subunit A-2 (Arabidopsis thaliana (Mouse-ear cress)).